The primary structure comprises 429 residues: Glutamyl-tRNA reductase (429 aa).

Substrate-binding positions include 50 to 53 (TCNR), Ser116, 121 to 123 (EPQ), and Gln127. The active-site Nucleophile is Cys51. 196–201 (GAGEMA) provides a ligand contact to NADP(+).

This sequence belongs to the glutamyl-tRNA reductase family. In terms of assembly, homodimer.

The catalysed reaction is (S)-4-amino-5-oxopentanoate + tRNA(Glu) + NADP(+) = L-glutamyl-tRNA(Glu) + NADPH + H(+). It functions in the pathway porphyrin-containing compound metabolism; protoporphyrin-IX biosynthesis; 5-aminolevulinate from L-glutamyl-tRNA(Glu): step 1/2. In terms of biological role, catalyzes the NADPH-dependent reduction of glutamyl-tRNA(Glu) to glutamate 1-semialdehyde (GSA). The protein is Glutamyl-tRNA reductase of Thermodesulfovibrio yellowstonii (strain ATCC 51303 / DSM 11347 / YP87).